Here is a 505-residue protein sequence, read N- to C-terminus: uncharacterized protein (505 aa).

The segment covering 1-16 has biased composition (polar residues); that stretch reads MPPTASLTRSPPTASQ. The tract at residues 1-474 is disordered; the sequence is MPPTASLTRS…TPPTASLTRT (474 aa). Composition is skewed to low complexity over residues 17-33 and 40-59; these read TRTL…PRAS and TASL…PPRA. Residues 66–78 are compositionally biased toward polar residues; it reads SRASLTRTLSRAS. Low complexity-rich tracts occupy residues 96–122, 129–140, and 147–158; these read SLTR…PPRT, PRTSQTRTPPRA, and SRASRTRTPPRA. 2 stretches are compositionally biased toward polar residues: residues 165 to 177 and 188 to 200; these read SRAS…SRAS and TRTP…TRTP. The segment covering 201–226 has biased composition (low complexity); sequence PTASLTRASRTRTPPRTSQTRTPPRA. 7 stretches are compositionally biased toward polar residues: residues 233–254, 265–293, 309–329, 345–365, 373–383, 399–408, and 435–448; these read SRAS…SRAS, TRTP…SLTR, LTRT…SLTR, TRTPSRASLTR, LTRSPPTASL, and LTRS…TRTP. Over residues 453 to 474 the composition is skewed to low complexity; the sequence is LRRTPPRTSLTRTPPTASLTRT.

This is an uncharacterized protein from Homo sapiens (Human).